A 392-amino-acid polypeptide reads, in one-letter code: tRNA (guanine-N(7)-)-methyltransferase (392 aa).

S-adenosyl-L-methionine is bound by residues E123, E148, and D175. Positions 201 and 231 each coordinate substrate.

It belongs to the class I-like SAM-binding methyltransferase superfamily. TrmB family.

The catalysed reaction is guanosine(46) in tRNA + S-adenosyl-L-methionine = N(7)-methylguanosine(46) in tRNA + S-adenosyl-L-homocysteine. It functions in the pathway tRNA modification; N(7)-methylguanine-tRNA biosynthesis. Catalyzes the formation of N(7)-methylguanine at position 46 (m7G46) in tRNA. In Campylobacter jejuni (strain RM1221), this protein is tRNA (guanine-N(7)-)-methyltransferase.